The following is a 97-amino-acid chain: Zinc metalloproteinase-disintegrin-like bothrojarin-4 (97 aa).

Positions P4–N90 constitute a Disintegrin domain. Residues V6, N9, F11, E13, E16, and D19 each coordinate Ca(2+). 7 disulfide bridges follow: C7-C36, C18-C31, C20-C26, C30-C53, C44-C50, C49-C75, and C62-C82. N-linked (GlcNAc...) asparagine glycosylation is present at N32. A D/ECD-tripeptide; atypical (KCD) motif is present at residues K68–D70.

The protein belongs to the venom metalloproteinase (M12B) family. P-III subfamily. P-IIIa sub-subfamily. Monomer. The cofactor is Zn(2+). Expressed by the venom gland.

Its subcellular location is the secreted. The hemorrhagic metalloproteinase-disintegrin-like bothrojarin-1 is a potent inhibitor of collagen-induced platelet aggregation by blockage of alpha-2/beta-1 (ITGA2/ITGB1) integrin. It does not present any fibrinogen-clotting activity. This is Zinc metalloproteinase-disintegrin-like bothrojarin-4 from Bothrops jararaca (Jararaca).